The following is a 208-amino-acid chain: 3-demethoxyubiquinol 3-hydroxylase (208 aa).

Residues glutamate 57, glutamate 87, histidine 90, glutamate 139, glutamate 171, and histidine 174 each contribute to the Fe cation site.

The protein belongs to the COQ7 family. Fe cation is required as a cofactor.

Its subcellular location is the cell membrane. The catalysed reaction is a 5-methoxy-2-methyl-3-(all-trans-polyprenyl)benzene-1,4-diol + AH2 + O2 = a 3-demethylubiquinol + A + H2O. It participates in cofactor biosynthesis; ubiquinone biosynthesis. In terms of biological role, catalyzes the hydroxylation of 2-nonaprenyl-3-methyl-6-methoxy-1,4-benzoquinol during ubiquinone biosynthesis. The chain is 3-demethoxyubiquinol 3-hydroxylase from Burkholderia thailandensis (strain ATCC 700388 / DSM 13276 / CCUG 48851 / CIP 106301 / E264).